Here is a 107-residue protein sequence, read N- to C-terminus: uncharacterized protein (107 aa).

Residues phenylalanine 34 to tyrosine 107 are a coiled coil.

This is an uncharacterized protein from Dictyostelium discoideum (Social amoeba).